The chain runs to 490 residues: 2-succinylbenzoate--CoA ligase (490 aa).

This sequence belongs to the ATP-dependent AMP-binding enzyme family. MenE subfamily.

The catalysed reaction is 2-succinylbenzoate + ATP + CoA = 2-succinylbenzoyl-CoA + AMP + diphosphate. Its pathway is quinol/quinone metabolism; 1,4-dihydroxy-2-naphthoate biosynthesis; 1,4-dihydroxy-2-naphthoate from chorismate: step 5/7. The protein operates within quinol/quinone metabolism; menaquinone biosynthesis. Its function is as follows. Converts 2-succinylbenzoate (OSB) to 2-succinylbenzoyl-CoA (OSB-CoA). In Geobacillus kaustophilus (strain HTA426), this protein is 2-succinylbenzoate--CoA ligase.